Reading from the N-terminus, the 349-residue chain is MTVLNRTDTLVDELTADITNTPLGYGGVDGDERWAAEIRRLAHLRGATVLAHNYQLPAIQDVADHVGDSLALSRVAAEAPEDTIVFCGVHFMAETAKILSPHKTVLIPDQRAGCSLADSITPDELRAWKDEHPGAVVVSYVNTTAAVKALTDICCTSSNAVDVVASIDPDREVLFCPDQFLGAHVRRVTGRKNLHVWAGECHVHAGINGDELADQARAHPDAELFVHPECGCATSALYLAGEGAFPAERVKILSTGGMLEAAHTTRARQVLVATEVGMLHQLRRAAPEVDFRAVNDRASCKYMKMITPAALLRCLVEGADEVHVDPGIAASGRRSVQRMIEIGHPGGGE.

Iminosuccinate is bound by residues His52 and Ser69. Residue Cys114 participates in [4Fe-4S] cluster binding. Iminosuccinate contacts are provided by residues 140 to 142 (YVN) and Ser157. Cys201 provides a ligand contact to [4Fe-4S] cluster. Iminosuccinate-binding positions include 227-229 (HPE) and Thr255. Cys300 is a [4Fe-4S] cluster binding site.

Belongs to the quinolinate synthase family. Type 2 subfamily. [4Fe-4S] cluster serves as cofactor.

The protein localises to the cytoplasm. The enzyme catalyses iminosuccinate + dihydroxyacetone phosphate = quinolinate + phosphate + 2 H2O + H(+). It functions in the pathway cofactor biosynthesis; NAD(+) biosynthesis; quinolinate from iminoaspartate: step 1/1. Its function is as follows. Catalyzes the condensation of iminoaspartate with dihydroxyacetone phosphate to form quinolinate. The chain is Quinolinate synthase from Mycobacterium bovis (strain BCG / Tokyo 172 / ATCC 35737 / TMC 1019).